Here is a 54-residue protein sequence, read N- to C-terminus: Ovomucoid (54 aa).

In terms of domain architecture, Kazal-like spans 4–54 (VDCSDYPRPVCTLDYMPLCGSDNKTYSNKCNFCNAVVDSNGTITLSHFGRC). 3 disulfides stabilise this stretch: C6–C36, C14–C33, and C22–C54. N-linked (GlcNAc...) asparagine glycosylation is present at N43.

Its subcellular location is the secreted. This chain is Ovomucoid, found in Corvus albus (Pied crow).